Here is a 592-residue protein sequence, read N- to C-terminus: Multidrug transporter AQR1 (592 aa).

The interval 1-77 is disordered; it reads MVESGPHSIN…EISSTHSQDA (77 aa). A helical transmembrane segment spans residues 99–119; sequence WCMVALLTACGFWSSLGSPIY. The N-linked (GlcNAc...) asparagine glycan is linked to N138. 5 consecutive transmembrane segments (helical) span residues 139–159, 166–186, 188–208, 231–251, and 255–275; these read ITVV…GGLA, PVLL…ACAP, YGVI…SIAI, GFVL…AAAW, and AIFW…FALL. N285 carries N-linked (GlcNAc...) asparagine glycosylation. Transmembrane regions (helical) follow at residues 340-360, 374-394, 432-452, 459-479, 497-517, and 523-543; these read IFLS…MLSA, LTII…GSFA, LQSV…FGWS, IPSI…TLSA, SCFN…FAKM, and VGGT…LMFI.

Belongs to the major facilitator superfamily. CAR1 family.

It is found in the cell membrane. Its function is as follows. Multidrug transporter acts as a determinant of resistance to acetic acid, flucytosine and clotrimazole, these 3 compounds acting synergistically against the pathogen. Reduces the intracellular accumulation of the antifungal agents flucytosine and, to a moderate extent, of clotrimazole. Its role in acetic acid resistance may be indirect, presumably through the transport of a still unidentified physiological substrate. In Candida glabrata (strain ATCC 2001 / BCRC 20586 / JCM 3761 / NBRC 0622 / NRRL Y-65 / CBS 138) (Yeast), this protein is Multidrug transporter AQR1.